A 404-amino-acid polypeptide reads, in one-letter code: Putative glutamate--cysteine ligase 2 (404 aa).

The disordered stretch occupies residues 377-404 (GPAGKRAHEGGRSFRPAAGAPMSIRGQE).

Belongs to the glutamate--cysteine ligase type 2 family. YbdK subfamily.

It catalyses the reaction L-cysteine + L-glutamate + ATP = gamma-L-glutamyl-L-cysteine + ADP + phosphate + H(+). In terms of biological role, ATP-dependent carboxylate-amine ligase which exhibits weak glutamate--cysteine ligase activity. The protein is Putative glutamate--cysteine ligase 2 of Pseudomonas aeruginosa (strain UCBPP-PA14).